We begin with the raw amino-acid sequence, 368 residues long: Phosphate acyltransferase (368 aa).

Positions 335 to 368 (VSLGDGEHDAGGAGPASPAAGHHAEPSAAQSSKA) are disordered. The segment covering 349 to 368 (PASPAAGHHAEPSAAQSSKA) has biased composition (low complexity).

The protein belongs to the PlsX family. As to quaternary structure, homodimer. Probably interacts with PlsY.

Its subcellular location is the cytoplasm. The catalysed reaction is a fatty acyl-[ACP] + phosphate = an acyl phosphate + holo-[ACP]. Its pathway is lipid metabolism; phospholipid metabolism. Functionally, catalyzes the reversible formation of acyl-phosphate (acyl-PO(4)) from acyl-[acyl-carrier-protein] (acyl-ACP). This enzyme utilizes acyl-ACP as fatty acyl donor, but not acyl-CoA. This Burkholderia multivorans (strain ATCC 17616 / 249) protein is Phosphate acyltransferase.